A 335-amino-acid chain; its full sequence is Pyridoxal 5'-phosphate synthase subunit PdxS (335 aa).

Residue Asp-30 coordinates D-ribose 5-phosphate. Catalysis depends on Lys-87, which acts as the Schiff-base intermediate with D-ribose 5-phosphate. Residue Gly-159 participates in D-ribose 5-phosphate binding. Arg-171 contributes to the D-glyceraldehyde 3-phosphate binding site. D-ribose 5-phosphate is bound by residues Gly-257 and 278–279 (GS).

This sequence belongs to the PdxS/SNZ family. As to quaternary structure, in the presence of PdxT, forms a dodecamer of heterodimers.

The enzyme catalyses aldehydo-D-ribose 5-phosphate + D-glyceraldehyde 3-phosphate + L-glutamine = pyridoxal 5'-phosphate + L-glutamate + phosphate + 3 H2O + H(+). It functions in the pathway cofactor biosynthesis; pyridoxal 5'-phosphate biosynthesis. Functionally, catalyzes the formation of pyridoxal 5'-phosphate from ribose 5-phosphate (RBP), glyceraldehyde 3-phosphate (G3P) and ammonia. The ammonia is provided by the PdxT subunit. Can also use ribulose 5-phosphate and dihydroxyacetone phosphate as substrates, resulting from enzyme-catalyzed isomerization of RBP and G3P, respectively. The protein is Pyridoxal 5'-phosphate synthase subunit PdxS of Thermococcus gammatolerans (strain DSM 15229 / JCM 11827 / EJ3).